The sequence spans 198 residues: Recombination protein RecR (198 aa).

Residues 57–72 form a C4-type zinc finger; the sequence is CSICGNITEEDPCEIC. The Toprim domain maps to 80-175; sequence SIILVVEEPK…TVTRLAHGLS (96 aa).

It belongs to the RecR family.

Functionally, may play a role in DNA repair. It seems to be involved in an RecBC-independent recombinational process of DNA repair. It may act with RecF and RecO. This Enterococcus faecalis (strain ATCC 700802 / V583) protein is Recombination protein RecR.